The chain runs to 411 residues: Adenylosuccinate synthetase (411 aa).

GTP contacts are provided by residues 11–17 (GDEGKGK) and 39–41 (GHT). Aspartate 12 acts as the Proton acceptor in catalysis. Residues aspartate 12 and glycine 39 each contribute to the Mg(2+) site. Residues 12–15 (DEGK), 37–40 (NAGH), threonine 121, arginine 135, glutamine 215, threonine 230, and arginine 294 contribute to the IMP site. The active-site Proton donor is the histidine 40. Position 290 to 296 (290 to 296 (TTTKRPR)) interacts with substrate. GTP is bound by residues arginine 296, 322–324 (KLD), and 400–402 (STS).

This sequence belongs to the adenylosuccinate synthetase family. Homodimer. The cofactor is Mg(2+).

It localises to the cytoplasm. It carries out the reaction IMP + L-aspartate + GTP = N(6)-(1,2-dicarboxyethyl)-AMP + GDP + phosphate + 2 H(+). It functions in the pathway purine metabolism; AMP biosynthesis via de novo pathway; AMP from IMP: step 1/2. Functionally, plays an important role in the de novo pathway of purine nucleotide biosynthesis. Catalyzes the first committed step in the biosynthesis of AMP from IMP. This chain is Adenylosuccinate synthetase, found in Helicobacter pylori (strain G27).